We begin with the raw amino-acid sequence, 130 residues long: Small ribosomal subunit protein uS9 (130 aa).

It belongs to the universal ribosomal protein uS9 family.

This is Small ribosomal subunit protein uS9 from Variovorax paradoxus (strain S110).